The sequence spans 68 residues: Putative protein YfaH (68 aa).

This Escherichia coli (strain K12) protein is Putative protein YfaH (yfaH).